Reading from the N-terminus, the 85-residue chain is Prosialokinin (85 aa).

Positions 1–23 (MNMFITVQIVIVLVLAVLSEAAS) are cleaved as a signal peptide. A propeptide spanning residues 24–74 (LPTATERKDAMDEGPNQSDEPEGSVADPSTKDDDYSDSLKQDEKYYKVRLL) is cleaved from the precursor. The interval 26-61 (TATERKDAMDEGPNQSDEPEGSVADPSTKDDDYSDS) is disordered. The span at 52–61 (STKDDDYSDS) shows a compositional bias: basic and acidic residues. A Methionine amide modification is found at Met-84.

Belongs to the tachykinin family. Expressed exclusively in the medial lobe of female salivary gland. Not detected in female carcass without head and salivary glands. Not detected in male tissues.

It localises to the secreted. Vasodilatory peptide. Facilitates mosquito blood feeding on vertebrate host. Induces nitric oxide (NO) release in blood vessels through the activation of the nitric oxide synthase (NOS3). Enhances endothelial permeability and induces edema at the site of inoculation in the host. Induces host smooth muscle contraction. Down-regulates production of Th1 cytokines, such as IL2 and IFN-gamma (IFNG), in mouse splenocytes. Up-regulates production of Th2 cytokines, such as IL4 and IL10, in mouse splenocytes. Promotes recruitment of host leukocytes, especially neutrophils and CD8+ T cells, to the bite site. Modulates cytokine production by host macrophages. Modulates populations of monocytes/macrophages, plasmacytoid dendritic cells, B cells, CD4+ T cells, NK and NKT cells, shifting mammalian immunity towards Th2 responses. Functionally, (Microbial infection) Promotes Semliki Forest virus infection in the host. Its function is as follows. (Microbial infection) Does not affect Zika virus replication in the host. The sequence is that of Prosialokinin from Aedes aegypti (Yellowfever mosquito).